The following is a 63-amino-acid chain: Large ribosomal subunit protein uL29 (63 aa).

This sequence belongs to the universal ribosomal protein uL29 family.

The protein is Large ribosomal subunit protein uL29 of Haemophilus influenzae (strain 86-028NP).